The sequence spans 77 residues: Small ribosomal subunit protein bS21 (77 aa).

Basic and acidic residues predominate over residues lysine 38 to arginine 52. Positions lysine 38–lysine 77 are disordered. The span at arginine 53–alanine 62 shows a compositional bias: basic residues.

This sequence belongs to the bacterial ribosomal protein bS21 family.

In Bartonella henselae (strain ATCC 49882 / DSM 28221 / CCUG 30454 / Houston 1) (Rochalimaea henselae), this protein is Small ribosomal subunit protein bS21.